Reading from the N-terminus, the 106-residue chain is MESSTINAKKISVLLTLFSIIGYTAYSAHESILEIRQDGKLPLDIKCEVILVTLLFTFTTVIIASPLRSIQLNKWSHQRSDLAFLNSRTNFLRIKELKEKIEKVKN.

Over 1-12 (MESSTINAKKIS) the chain is Cytoplasmic. A helical transmembrane segment spans residues 13–33 (VLLTLFSIIGYTAYSAHESIL). Residues 34-46 (EIRQDGKLPLDIK) are Lumenal-facing. The helical transmembrane segment at 47–67 (CEVILVTLLFTFTTVIIASPL) threads the bilayer. Residues 68 to 106 (RSIQLNKWSHQRSDLAFLNSRTNFLRIKELKEKIEKVKN) are Cytoplasmic-facing.

This sequence belongs to the membrane magnesium transporter (TC 1.A.67) family. In terms of assembly, component of the ER membrane protein complex (EMC).

Its subcellular location is the endoplasmic reticulum membrane. The EMC seems to be required for efficient folding of proteins in the endoplasmic reticulum (ER). The protein is ER membrane protein complex subunit 5 (emc5) of Schizosaccharomyces pombe (strain 972 / ATCC 24843) (Fission yeast).